Consider the following 738-residue polypeptide: NAD(P)H-quinone oxidoreductase subunit 5, chloroplastic (738 aa).

The next 16 helical transmembrane spans lie at 9 to 29 (WIIP…LLLF), 40 to 60 (WAFP…NLSI), 89 to 109 (IDPL…MVLI), 125 to 145 (FASM…SNLI), 147 to 167 (IYIF…FWFT), 185 to 205 (GDFG…SFEF), 230 to 250 (AALL…HVWL), 258 to 278 (TPIS…FLVA), 280 to 300 (LLPL…IGII), 327 to 347 (LGYM…FHLI), 354 to 374 (ALLF…VGYS), 396 to 416 (ISFL…CFWS), 425 to 445 (WLYS…TAFY), 546 to 566 (LFPL…GIPF), 603 to 623 (FSVS…KPIY), and 718 to 738 (YLFF…FPVF).

It belongs to the complex I subunit 5 family. As to quaternary structure, NDH is composed of at least 16 different subunits, 5 of which are encoded in the nucleus.

The protein resides in the plastid. The protein localises to the chloroplast thylakoid membrane. It catalyses the reaction a plastoquinone + NADH + (n+1) H(+)(in) = a plastoquinol + NAD(+) + n H(+)(out). The catalysed reaction is a plastoquinone + NADPH + (n+1) H(+)(in) = a plastoquinol + NADP(+) + n H(+)(out). In terms of biological role, NDH shuttles electrons from NAD(P)H:plastoquinone, via FMN and iron-sulfur (Fe-S) centers, to quinones in the photosynthetic chain and possibly in a chloroplast respiratory chain. The immediate electron acceptor for the enzyme in this species is believed to be plastoquinone. Couples the redox reaction to proton translocation, and thus conserves the redox energy in a proton gradient. This chain is NAD(P)H-quinone oxidoreductase subunit 5, chloroplastic (ndhF), found in Ligustrum vulgare (Common privet).